We begin with the raw amino-acid sequence, 258 residues long: MTSSAPVGVFDSGLGGISVVRQIRTDLPHERILYFGDSANAPYGTKTPEQVRDLSFRIVEDFVEQGAKAVVIACNTATSSAVQELREHYDIPIIGMEPALKVACDRGHGERQSVIVAATPLTLRERKFAALMHRFEDAHTIHKQPCPRLVEIVERGELDDHDLVMRTLHDYFDQYDLAHTDSVVLGCTHFVFYRDYFRELLPNNVAIVDGNEGTARHLEVVLESLGKLAPEEQDGGVILRNSDPGERIAELAQQLLER.

Substrate contacts are provided by residues D11–S12 and Y43–G44. The active-site Proton donor/acceptor is the C74. N75–T76 serves as a coordination point for substrate. The Proton donor/acceptor role is filled by C187. T188–H189 contributes to the substrate binding site.

The protein belongs to the aspartate/glutamate racemases family.

It carries out the reaction L-glutamate = D-glutamate. Its pathway is cell wall biogenesis; peptidoglycan biosynthesis. In terms of biological role, provides the (R)-glutamate required for cell wall biosynthesis. The protein is Glutamate racemase of Bifidobacterium animalis subsp. lactis (strain AD011).